The primary structure comprises 97 residues: Large ribosomal subunit protein eL21 (97 aa).

It belongs to the eukaryotic ribosomal protein eL21 family.

The polypeptide is Large ribosomal subunit protein eL21 (Methanoculleus marisnigri (strain ATCC 35101 / DSM 1498 / JR1)).